A 123-amino-acid chain; its full sequence is Ribulose bisphosphate carboxylase small subunit, chloroplastic 1 (123 aa).

Met1 is subject to Methionine derivative.

It belongs to the RuBisCO small chain family. In terms of assembly, heterohexadecamer of 8 large and 8 small subunits.

It is found in the plastid. The protein resides in the chloroplast. Functionally, ruBisCO catalyzes two reactions: the carboxylation of D-ribulose 1,5-bisphosphate, the primary event in carbon dioxide fixation, as well as the oxidative fragmentation of the pentose substrate. Both reactions occur simultaneously and in competition at the same active site. Although the small subunit is not catalytic it is essential for maximal activity. In Spinacia oleracea (Spinach), this protein is Ribulose bisphosphate carboxylase small subunit, chloroplastic 1.